Here is a 466-residue protein sequence, read N- to C-terminus: 3-isopropylmalate dehydratase large subunit (466 aa).

The [4Fe-4S] cluster site is built by cysteine 347, cysteine 407, and cysteine 410.

Belongs to the aconitase/IPM isomerase family. LeuC type 1 subfamily. As to quaternary structure, heterodimer of LeuC and LeuD. The cofactor is [4Fe-4S] cluster.

The catalysed reaction is (2R,3S)-3-isopropylmalate = (2S)-2-isopropylmalate. Its pathway is amino-acid biosynthesis; L-leucine biosynthesis; L-leucine from 3-methyl-2-oxobutanoate: step 2/4. Functionally, catalyzes the isomerization between 2-isopropylmalate and 3-isopropylmalate, via the formation of 2-isopropylmaleate. This is 3-isopropylmalate dehydratase large subunit from Pseudoalteromonas translucida (strain TAC 125).